We begin with the raw amino-acid sequence, 348 residues long: Galanin receptor type 1 (348 aa).

The Extracellular segment spans residues 1-34 (MELAMVNLSEGNGSDPEPPAPESRPLFGIGVENF). N-linked (GlcNAc...) asparagine glycans are attached at residues Asn7 and Asn12. The helical transmembrane segment at 35 to 55 (ITLVVFGLIFAMGVLGNSLVI) threads the bilayer. The Cytoplasmic segment spans residues 56–70 (TVLARSKPGKPRSTT). Residues 71 to 91 (NLFILNLSIADLAYLLFCIPF) traverse the membrane as a helical segment. The Extracellular segment spans residues 92–109 (QATVYALPTWVLGAFICK). Cys108 and Cys186 form a disulfide bridge. Residues 110–131 (FIHYFFTVSMLVSIFTLAAMSV) form a helical membrane-spanning segment. Residues 132–151 (DRYVAIVHSRRSSSLRVSRN) are Cytoplasmic-facing. The chain crosses the membrane as a helical span at residues 152 to 172 (ALLGVGFIWALSIAMASPVAY). Residues 173 to 197 (HQRLFHRDSNQTFCWEQWPNKLHKK) lie on the Extracellular side of the membrane. Asn182 is a glycosylation site (N-linked (GlcNAc...) asparagine). The helical transmembrane segment at 198–218 (AYVVCTFVFGYLLPLLLICFC) threads the bilayer. Topologically, residues 219 to 247 (YAKVLNHLHKKLKNMSKKSEASKKKTAQT) are cytoplasmic. Residues 248 to 268 (VLVVVVVFGISWLPHHVVHLW) traverse the membrane as a helical segment. At 269-270 (AE) the chain is on the extracellular side. The helical transmembrane segment at 271-291 (FGAFPLTPASFFFRITAHCLA) threads the bilayer. Topologically, residues 292 to 348 (YSNSSVNPIIYAFLSENFRKAYKQVFKCHVCDESPRSETKENKSRMDTPPSTNCTHV) are cytoplasmic. A lipid anchor (S-palmitoyl cysteine) is attached at Cys319. The segment covering 328-337 (SETKENKSRM) has biased composition (basic and acidic residues). A disordered region spans residues 328–348 (SETKENKSRMDTPPSTNCTHV).

The protein belongs to the G-protein coupled receptor 1 family. As to quaternary structure, interacts with GRP39 AND HTR1A. In terms of processing, three cysteine residues are found in the C-terminus, at least one of which may be palmitoylated. As to expression, expression is detected in brain, spinal cord, heart and skeletal muscle.

It is found in the cell membrane. Receptor for the hormone galanin. The activity of this receptor is mediated by G proteins that inhibit adenylate cyclase activity. This chain is Galanin receptor type 1 (Galr1), found in Mus musculus (Mouse).